Here is a 523-residue protein sequence, read N- to C-terminus: NAD(P)H-quinone oxidoreductase subunit 2 (523 aa).

13 helical membrane-spanning segments follow: residues 29-49, 57-77, 94-114, 128-148, 182-202, 223-243, 255-275, 291-311, 317-337, 345-365, 389-409, 424-444, and 477-497; these read AVAP…VDLA, WVPP…ALQW, LAIA…MISW, AGIL…TDLV, LLVG…LYGL, AALA…AVPF, PTPV…ALAL, LLFT…ALAQ, MLAY…VCGT, VLYT…IILF, LGLS…GFFG, VLVV…IGVI, and VALV…NPLF.

It belongs to the complex I subunit 2 family. As to quaternary structure, NDH-1 can be composed of about 15 different subunits; different subcomplexes with different compositions have been identified which probably have different functions.

It localises to the cellular thylakoid membrane. It catalyses the reaction a plastoquinone + NADH + (n+1) H(+)(in) = a plastoquinol + NAD(+) + n H(+)(out). The catalysed reaction is a plastoquinone + NADPH + (n+1) H(+)(in) = a plastoquinol + NADP(+) + n H(+)(out). Functionally, NDH-1 shuttles electrons from an unknown electron donor, via FMN and iron-sulfur (Fe-S) centers, to quinones in the respiratory and/or the photosynthetic chain. The immediate electron acceptor for the enzyme in this species is believed to be plastoquinone. Couples the redox reaction to proton translocation, and thus conserves the redox energy in a proton gradient. Cyanobacterial NDH-1 also plays a role in inorganic carbon-concentration. This chain is NAD(P)H-quinone oxidoreductase subunit 2, found in Synechococcus sp. (strain WH7803).